Consider the following 441-residue polypeptide: Actin-related protein 4 (441 aa).

The tract at residues 48–73 (VDVDSTKTNSNSEDSKTESEKEKSKR) is disordered. Residues 60 to 70 (EDSKTESEKEK) show a composition bias toward basic and acidic residues.

This sequence belongs to the actin family. ARP4 subfamily. In terms of assembly, component of the SWR1 chromatin-remodeling complex and of the NuA4 histone acetyltransferase complex. Interacts with the SWI/SNF complex. Interacts with EAF1A and EAF1B. Mostly expressed in flowers, and, to a lower extent, in roots, seedlings, leaves and siliques (at protein level).

Its subcellular location is the nucleus. It is found in the cytoplasm. In terms of biological role, involved in several developmental processes including organization of plant organs, flowering time, anther development, flower senescence and fertility, probably by regulating the chromatin structure. The polypeptide is Actin-related protein 4 (Arabidopsis thaliana (Mouse-ear cress)).